The sequence spans 397 residues: Leucine carboxyl methyltransferase 1 (397 aa).

A disordered region spans residues 17–61 (AIQTPPPTDPNAAPAHRPAPRPALGRCRPPHRRRRRLRPPVRPPL). Residues 26-43 (PNAAPAHRPAPRPALGRC) are compositionally biased toward low complexity. Basic residues predominate over residues 44–55 (RPPHRRRRRLRP). Residues Arg-119, Gly-142, Asp-168, 224–225 (DL), and Glu-259 contribute to the S-adenosyl-L-methionine site.

This sequence belongs to the methyltransferase superfamily. LCMT family.

It catalyses the reaction [phosphatase 2A protein]-C-terminal L-leucine + S-adenosyl-L-methionine = [phosphatase 2A protein]-C-terminal L-leucine methyl ester + S-adenosyl-L-homocysteine. In terms of biological role, methylates the carboxyl group of the C-terminal leucine residue of protein phosphatase 2A catalytic subunits to form alpha-leucine ester residues. The polypeptide is Leucine carboxyl methyltransferase 1 (PPM1) (Cryptococcus neoformans var. neoformans serotype D (strain B-3501A) (Filobasidiella neoformans)).